A 191-amino-acid polypeptide reads, in one-letter code: dITP/XTP pyrophosphatase (191 aa).

8–13 (SKNQGK) provides a ligand contact to substrate. Mg(2+) is bound by residues Glu38 and Asp67. Asp67 functions as the Proton acceptor in the catalytic mechanism. Substrate is bound by residues Ser68, 146–149 (FGYD), Lys169, and 174–175 (HR).

This sequence belongs to the HAM1 NTPase family. Homodimer. It depends on Mg(2+) as a cofactor.

It carries out the reaction XTP + H2O = XMP + diphosphate + H(+). The enzyme catalyses dITP + H2O = dIMP + diphosphate + H(+). The catalysed reaction is ITP + H2O = IMP + diphosphate + H(+). Pyrophosphatase that catalyzes the hydrolysis of nucleoside triphosphates to their monophosphate derivatives, with a high preference for the non-canonical purine nucleotides XTP (xanthosine triphosphate), dITP (deoxyinosine triphosphate) and ITP. Seems to function as a house-cleaning enzyme that removes non-canonical purine nucleotides from the nucleotide pool, thus preventing their incorporation into DNA/RNA and avoiding chromosomal lesions. This Prochlorococcus marinus subsp. pastoris (strain CCMP1986 / NIES-2087 / MED4) protein is dITP/XTP pyrophosphatase.